Here is a 265-residue protein sequence, read N- to C-terminus: Glutamate racemase (265 aa).

Residues 12–13 and 44–45 each bind substrate; these read DS and YG. Cys-75 serves as the catalytic Proton donor/acceptor. A substrate-binding site is contributed by 76-77; it reads NT. The active-site Proton donor/acceptor is Cys-183. 184-185 serves as a coordination point for substrate; that stretch reads TH.

It belongs to the aspartate/glutamate racemases family.

The enzyme catalyses L-glutamate = D-glutamate. The protein operates within cell wall biogenesis; peptidoglycan biosynthesis. Functionally, provides the (R)-glutamate required for cell wall biosynthesis. The protein is Glutamate racemase of Carboxydothermus hydrogenoformans (strain ATCC BAA-161 / DSM 6008 / Z-2901).